Consider the following 447-residue polypeptide: Methionine aminopeptidase 2-2 (447 aa).

A disordered region spans residues 1-89 (MAAQTAPELA…PRIPLTTLFP (89 aa)). Polar residues predominate over residues 15 to 30 (NKNSGSAEANVVSNGG). Acidic residues predominate over residues 34 to 47 (DDAENEGDSDDDKD). Over residues 59–73 (KKKKKKRSKKKKKAA) the composition is skewed to basic residues. H197 is a substrate binding site. Positions 217, 228, and 297 each coordinate a divalent metal cation. Substrate is bound at residue H305. A divalent metal cation is bound by residues E333 and E428.

It belongs to the peptidase M24A family. Methionine aminopeptidase eukaryotic type 2 subfamily. It depends on Co(2+) as a cofactor. Zn(2+) is required as a cofactor. Requires Mn(2+) as cofactor. The cofactor is Fe(2+).

It is found in the cytoplasm. The catalysed reaction is Release of N-terminal amino acids, preferentially methionine, from peptides and arylamides.. Its function is as follows. Cotranslationally removes the N-terminal methionine from nascent proteins. The N-terminal methionine is often cleaved when the second residue in the primary sequence is small and uncharged (Met-Ala-, Cys, Gly, Pro, Ser, Thr, or Val). This chain is Methionine aminopeptidase 2-2, found in Arthroderma otae (strain ATCC MYA-4605 / CBS 113480) (Microsporum canis).